The following is a 109-amino-acid chain: Large ribosomal subunit protein uL22 (109 aa).

It belongs to the universal ribosomal protein uL22 family. Part of the 50S ribosomal subunit.

This protein binds specifically to 23S rRNA; its binding is stimulated by other ribosomal proteins, e.g. L4, L17, and L20. It is important during the early stages of 50S assembly. It makes multiple contacts with different domains of the 23S rRNA in the assembled 50S subunit and ribosome. Its function is as follows. The globular domain of the protein is located near the polypeptide exit tunnel on the outside of the subunit, while an extended beta-hairpin is found that lines the wall of the exit tunnel in the center of the 70S ribosome. This Azoarcus sp. (strain BH72) protein is Large ribosomal subunit protein uL22.